A 126-amino-acid polypeptide reads, in one-letter code: MAIVGLGTDIAEIERVEKALSRSGDAFAERILSQSEFERYQGLKQKGRFLAKRFAAKEAASKALGTGISHGVTFHDFTISNDDNGKPILTLSGKALVLSQQSSVSHIHLTISDERHYAVATVIFES.

Aspartate 9 and glutamate 58 together coordinate Mg(2+).

It belongs to the P-Pant transferase superfamily. AcpS family. Mg(2+) is required as a cofactor.

It localises to the cytoplasm. It carries out the reaction apo-[ACP] + CoA = holo-[ACP] + adenosine 3',5'-bisphosphate + H(+). Functionally, transfers the 4'-phosphopantetheine moiety from coenzyme A to a Ser of acyl-carrier-protein. This Aliivibrio salmonicida (strain LFI1238) (Vibrio salmonicida (strain LFI1238)) protein is Holo-[acyl-carrier-protein] synthase.